The sequence spans 252 residues: Chitooligosaccharide deacetylase (252 aa).

The Mg(2+) site is built by H61 and H125.

It belongs to the YdjC deacetylase family. ChbG subfamily. Homodimer. Mg(2+) serves as cofactor.

It is found in the cytoplasm. It catalyses the reaction N,N'-diacetylchitobiose + H2O = N-acetyl-beta-D-glucosaminyl-(1-&gt;4)-D-glucosamine + acetate. It carries out the reaction diacetylchitobiose-6'-phosphate + H2O = N'-monoacetylchitobiose-6'-phosphate + acetate. It participates in glycan degradation; chitin degradation. Its function is as follows. Involved in the degradation of chitin. ChbG is essential for growth on the acetylated chitooligosaccharides chitobiose and chitotriose but is dispensable for growth on cellobiose and chitosan dimer, the deacetylated form of chitobiose. Deacetylation of chitobiose-6-P and chitotriose-6-P is necessary for both the activation of the chb promoter by the regulatory protein ChbR and the hydrolysis of phosphorylated beta-glucosides by the phospho-beta-glucosidase ChbF. Catalyzes the removal of only one acetyl group from chitobiose-6-P to yield monoacetylchitobiose-6-P, the inducer of ChbR and the substrate of ChbF. The chain is Chitooligosaccharide deacetylase from Citrobacter koseri (strain ATCC BAA-895 / CDC 4225-83 / SGSC4696).